A 133-amino-acid chain; its full sequence is MPPKPRIALIAHDHKKDDIVAFAARHRAFLSQCELLATGTTGGRLIDEVGLDVTRMLSGPWGGDLQIGAQLAEGRVSAVVFLRDPMTPQPHEPDINALVRACDVHNVPCATNVASAELLLAGLARENGAAQAG.

The MGS-like domain occupies 1–133; the sequence is MPPKPRIALI…ARENGAAQAG (133 aa). Residues histidine 12, lysine 16, 38 to 41, and 58 to 59 contribute to the substrate site; these read TGTT and SG. The active-site Proton donor/acceptor is aspartate 64. Histidine 91 is a binding site for substrate.

The protein belongs to the methylglyoxal synthase family.

It catalyses the reaction dihydroxyacetone phosphate = methylglyoxal + phosphate. Its function is as follows. Catalyzes the formation of methylglyoxal from dihydroxyacetone phosphate. This is Methylglyoxal synthase from Cupriavidus taiwanensis (strain DSM 17343 / BCRC 17206 / CCUG 44338 / CIP 107171 / LMG 19424 / R1) (Ralstonia taiwanensis (strain LMG 19424)).